A 139-amino-acid chain; its full sequence is Large ribosomal subunit protein uL16 (139 aa).

It belongs to the universal ribosomal protein uL16 family. In terms of assembly, part of the 50S ribosomal subunit.

In terms of biological role, binds 23S rRNA and is also seen to make contacts with the A and possibly P site tRNAs. In Chlorobium chlorochromatii (strain CaD3), this protein is Large ribosomal subunit protein uL16.